A 526-amino-acid polypeptide reads, in one-letter code: Alpha-N-acetylgalactosaminide alpha-2,6-sialyltransferase 1 (526 aa).

Over 1–12 (MTRYCRGLSQRQ) the chain is Cytoplasmic. A helical; Signal-anchor for type II membrane protein transmembrane segment spans residues 13–33 (AFLLLTVLALLFILLFVVKDP). Residues 34–526 (RAKDSRCQFI…QRPQSDKAKN (493 aa)) are Lumenal-facing. Residues 49–182 (SAQENQQKAE…TRRRQRLKAS (134 aa)) are disordered. The span at 81-106 (KDLKKQEREAVQGEQAEGKEKRKLET) shows a compositional bias: basic and acidic residues. Over residues 161–171 (ATKSPASSPHP) the composition is skewed to polar residues. 5 N-linked (GlcNAc...) asparagine glycosylation sites follow: N206, N228, N259, N303, and N388. Cystine bridges form between C207-C290 and C293-C461.

It belongs to the glycosyltransferase 29 family. Glycosylated; autosialylated. As to expression, submaxillary gland, mammary gland, spleen and colon.

The protein resides in the golgi apparatus membrane. It catalyses the reaction a beta-D-galactosyl-(1-&gt;3)-N-acetyl-alpha-D-galactosaminyl derivative + CMP-N-acetyl-beta-neuraminate = a beta-D-galactosyl-(1-&gt;3)-[N-acetyl-alpha-neuraminyl-(2-&gt;6)]-N-acetyl-alpha-D-galactosaminyl derivative + CMP + H(+). It carries out the reaction a 3-O-[N-acetyl-alpha-D-galactosaminyl]-L-seryl-[protein] + CMP-N-acetyl-beta-neuraminate = a 3-O-[N-acetyl-alpha-neuraminosyl-(2-&gt;6)-N-acetyl-alpha-D-galactosaminyl]-L-seryl-[protein] + CMP + H(+). The enzyme catalyses a 3-O-[N-acetyl-alpha-D-galactosaminyl]-L-threonyl-[protein] + CMP-N-acetyl-beta-neuraminate = a 3-O-[N-acetyl-alpha-neuraminosyl-(2-&gt;6)-N-acetyl-alpha-D-galactosaminyl]-L-threonyl-[protein] + CMP + H(+). The catalysed reaction is a 3-O-[beta-D-galactosyl-(1-&gt;3)-N-acetyl-alpha-D-galactosaminyl]-L-seryl-[protein] + CMP-N-acetyl-beta-neuraminate = a 3-O-{beta-D-galactosyl-(1-&gt;3)-[N-acetyl-alpha-neuraminosyl-(2-&gt;6)]-N-acetyl-alpha-D-galactosaminyl}-L-seryl-[protein] + CMP + H(+). It catalyses the reaction a 3-O-[beta-D-galactosyl-(1-&gt;3)-N-acetyl-alpha-D-galactosaminyl]-L-threonyl-[protein] + CMP-N-acetyl-beta-neuraminate = a 3-O-{beta-D-galactosyl-(1-&gt;3)-[N-acetyl-alpha-neuraminosyl-(2-&gt;6)]-N-acetyl-alpha-D-galactosaminyl}-L-threonyl-[protein] + CMP + H(+). It carries out the reaction a 3-O-[N-acetyl-alpha-neuraminyl-(2-&gt;3)-beta-D-galactosyl-(1-&gt;3)-N-acetyl-alpha-D-galactosaminyl]-L-threonyl-[protein] + CMP-N-acetyl-beta-neuraminate = a 3-O-{alpha-Neu5Ac-(2-&gt;3)-beta-D-Gal-(1-&gt;3)-[alpha-Neu5Ac-(2-&gt;6)]-alpha-D-GalNAc}-L-threonyl-[protein] + CMP + H(+). It participates in protein modification; protein glycosylation. In terms of biological role, protein sialyltransferase specifically expressed in goblet cells that plays a key role in intestinal host-commensal homeostasis. Conjugates sialic acid with an alpha-2-6 linkage to N-acetylgalactosamine (GalNAc) glycan chains linked to serine or threonine in glycoproteins. Catalyzes the formation of the sialyl-Tn (S-Tn) antigen, an antigen found in intestinal goblet cells. Protein sialylation in globlet cells is essential for mucus integrity and is required to protect the intestinal mucus against excessive bacterial proteolytic degradation. In Mus musculus (Mouse), this protein is Alpha-N-acetylgalactosaminide alpha-2,6-sialyltransferase 1.